A 161-amino-acid chain; its full sequence is FAD synthase (161 aa).

Residues 19–20, 24–27, Asp-106, and Tyr-133 contribute to the ATP site; these read TF and HPGH.

It belongs to the archaeal FAD synthase family. As to quaternary structure, homodimer. The cofactor is a divalent metal cation.

It carries out the reaction FMN + ATP + H(+) = FAD + diphosphate. Its pathway is cofactor biosynthesis; FAD biosynthesis; FAD from FMN: step 1/1. In terms of biological role, catalyzes the transfer of the AMP portion of ATP to flavin mononucleotide (FMN) to produce flavin adenine dinucleotide (FAD) coenzyme. The sequence is that of FAD synthase from Methanothermobacter marburgensis (strain ATCC BAA-927 / DSM 2133 / JCM 14651 / NBRC 100331 / OCM 82 / Marburg) (Methanobacterium thermoautotrophicum).